The primary structure comprises 342 residues: Succinylglutamate desuccinylase (342 aa).

Residues His-64, Glu-67, and His-159 each coordinate Zn(2+). Residue Glu-222 is part of the active site.

This sequence belongs to the AspA/AstE family. Succinylglutamate desuccinylase subfamily. Zn(2+) serves as cofactor.

The enzyme catalyses N-succinyl-L-glutamate + H2O = L-glutamate + succinate. It functions in the pathway amino-acid degradation; L-arginine degradation via AST pathway; L-glutamate and succinate from L-arginine: step 5/5. Functionally, transforms N(2)-succinylglutamate into succinate and glutamate. This Burkholderia orbicola (strain AU 1054) protein is Succinylglutamate desuccinylase.